The sequence spans 283 residues: Bifunctional protein FolD (283 aa).

Residues 165 to 167 (GRS), Ser-190, and Val-231 contribute to the NADP(+) site.

It belongs to the tetrahydrofolate dehydrogenase/cyclohydrolase family. In terms of assembly, homodimer. Interacts with BrxC.

It catalyses the reaction (6R)-5,10-methylene-5,6,7,8-tetrahydrofolate + NADP(+) = (6R)-5,10-methenyltetrahydrofolate + NADPH. It carries out the reaction (6R)-5,10-methenyltetrahydrofolate + H2O = (6R)-10-formyltetrahydrofolate + H(+). The protein operates within one-carbon metabolism; tetrahydrofolate interconversion. Catalyzes the oxidation of 5,10-methylenetetrahydrofolate to 5,10-methenyltetrahydrofolate and then the hydrolysis of 5,10-methenyltetrahydrofolate to 10-formyltetrahydrofolate. This Bacillus subtilis (strain 168) protein is Bifunctional protein FolD.